Consider the following 36-residue polypeptide: Cytochrome b6-f complex subunit 7 (36 aa).

The helical transmembrane segment at 9–29 threads the bilayer; that stretch reads NGAFIMIGLTLLGLAWGFVII.

Belongs to the PetM family. In terms of assembly, the 4 large subunits of the cytochrome b6-f complex are cytochrome b6, subunit IV (17 kDa polypeptide, PetD), cytochrome f and the Rieske protein, while the 4 small subunits are PetG, PetL, PetM and PetN. The complex functions as a dimer.

It localises to the cellular thylakoid membrane. Functionally, component of the cytochrome b6-f complex, which mediates electron transfer between photosystem II (PSII) and photosystem I (PSI), cyclic electron flow around PSI, and state transitions. The sequence is that of Cytochrome b6-f complex subunit 7 from Synechocystis sp. (strain ATCC 27184 / PCC 6803 / Kazusa).